The following is a 1101-amino-acid chain: Endoglucanase C (1101 aa).

The first 32 residues, Met1–Ala32, serve as a signal peptide directing secretion. 2 CBM-cenC domains span residues Leu64–Leu173 and Met212–Ile318. The catalytic stretch occupies residues Pro329–Tyr880. The active-site Nucleophile is the Asp506. The active site involves His831. The disordered stretch occupies residues Gln838–Thr865. Active-site residues include Asp882 and Glu891. Ig-like domains are found at residues Thr918 to Glu1006 and Ala1008 to Gln1097.

This sequence belongs to the glycosyl hydrolase 9 (cellulase E) family.

The enzyme catalyses Endohydrolysis of (1-&gt;4)-beta-D-glucosidic linkages in cellulose, lichenin and cereal beta-D-glucans.. Functionally, the biological conversion of cellulose to glucose generally requires three types of hydrolytic enzymes: (1) Endoglucanases which cut internal beta-1,4-glucosidic bonds; (2) Exocellobiohydrolases that cut the disaccharide cellobiose from the non-reducing end of the cellulose polymer chain; (3) Beta-1,4-glucosidases which hydrolyze the cellobiose and other short cello-oligosaccharides to glucose. The chain is Endoglucanase C (cenC) from Cellulomonas fimi (strain ATCC 484 / DSM 20113 / JCM 1341 / CCUG 24087 / LMG 16345 / NBRC 15513 / NCIMB 8980 / NCTC 7547 / NRS-133).